The sequence spans 622 residues: Zinc finger protein ZIC 5 (622 aa).

Disordered stretches follow at residues 50–171 (MHLH…KGHS), 190–223 (HGAPLGGEQRSGSSSPQHPTPPPHPAGMFISASG), 232–251 (GSALFPALHDSPGAPGGHPL), and 321–349 (PGPHLQHHAPPPAPPPAPAPHPHHPHLPG). A compositionally biased stretch (pro residues) spans 126 to 151 (APPPPAPPLPPSQSSSPPPPPPPPPA). Residues 329–340 (APPPAPPPAPAP) are compositionally biased toward pro residues. The segment at 422–444 (EDCPREGKPFKAKYKLINHIRVH) adopts a C2H2-type 1; degenerate zinc-finger fold. 3 consecutive C2H2-type zinc fingers follow at residues 450–474 (FPCPFPGCGKVFARSENLKIHKRTH), 480–504 (FKCEFDGCDRKFANSSDRKKHSHVH), and 510–534 (YYCKIRGCDKSYTHPSSLRKHMKIH). Disordered regions lie at residues 531-573 (MKIH…STLS) and 590-622 (APSHLHTPSSNGTTSESEDEEMYGNPEVMRTIH). 3 positions are modified to phosphoserine: serine 537, serine 541, and serine 559. Over residues 595–604 (HTPSSNGTTS) the composition is skewed to polar residues.

The protein belongs to the GLI C2H2-type zinc-finger protein family.

Its subcellular location is the nucleus. Essential for neural crest development, converting cells from an epidermal fate to a neural crest cell fate. Binds to DNA. This chain is Zinc finger protein ZIC 5 (Zic5), found in Mus musculus (Mouse).